A 509-amino-acid chain; its full sequence is Steroid 17-alpha-hydroxylase/17,20 lyase (509 aa).

Asparagine 202 is a binding site for substrate. Cysteine 442 provides a ligand contact to heme.

This sequence belongs to the cytochrome P450 family. Heme is required as a cofactor.

It localises to the endoplasmic reticulum membrane. Its subcellular location is the microsome membrane. It carries out the reaction a C21-steroid + reduced [NADPH--hemoprotein reductase] + O2 = a 17alpha-hydroxy-C21-steroid + oxidized [NADPH--hemoprotein reductase] + H2O + H(+). It catalyses the reaction progesterone + reduced [NADPH--hemoprotein reductase] + O2 = 17alpha-hydroxyprogesterone + oxidized [NADPH--hemoprotein reductase] + H2O + H(+). The enzyme catalyses pregnenolone + reduced [NADPH--hemoprotein reductase] + O2 = 17alpha-hydroxypregnenolone + oxidized [NADPH--hemoprotein reductase] + H2O + H(+). The catalysed reaction is 17alpha-hydroxyprogesterone + reduced [NADPH--hemoprotein reductase] + O2 = androst-4-ene-3,17-dione + acetate + oxidized [NADPH--hemoprotein reductase] + H2O + 2 H(+). It carries out the reaction 17alpha-hydroxyprogesterone + reduced [NADPH--hemoprotein reductase] + O2 = 16alpha,17alpha-dihydroxyprogesterone + oxidized [NADPH--hemoprotein reductase] + H2O + H(+). It catalyses the reaction 16alpha,17alpha-dihydroxyprogesterone + reduced [NADPH--hemoprotein reductase] + O2 = 6beta,16alpha,17alpha-trihydroxyprogesterone + oxidized [NADPH--hemoprotein reductase] + H2O + H(+). The enzyme catalyses 17alpha-hydroxypregnenolone + reduced [NADPH--hemoprotein reductase] + O2 = 3beta-hydroxyandrost-5-en-17-one + acetate + oxidized [NADPH--hemoprotein reductase] + H2O + 2 H(+). The catalysed reaction is 16alpha,17alpha-dihydroxypregnenolone + reduced [NADPH--hemoprotein reductase] + O2 = 3beta,16alpha-dihydroxy-androst-5-en-17-one + acetate + oxidized [NADPH--hemoprotein reductase] + H2O + 2 H(+). It carries out the reaction 3beta-hydroxyandrost-5-en-17-one + reduced [NADPH--hemoprotein reductase] + O2 = 3beta,16alpha-dihydroxy-androst-5-en-17-one + oxidized [NADPH--hemoprotein reductase] + H2O + H(+). It catalyses the reaction androst-4-ene-3,17-dione + reduced [NADPH--hemoprotein reductase] + O2 = 16alpha-hydroxyandrost-4-ene-3,17-dione + oxidized [NADPH--hemoprotein reductase] + H2O + H(+). It functions in the pathway steroid hormone biosynthesis. The protein operates within steroid biosynthesis; glucocorticoid biosynthesis. Regulated predominantly by intracellular cAMP levels. The 17,20-lyase activity is stimulated by cytochrome b5, which acts as an allosteric effector increasing the Vmax of the lyase activity. In terms of biological role, a cytochrome P450 monooxygenase involved in corticoid and androgen biosynthesis. Catalyzes 17-alpha hydroxylation of C21 steroids, which is common for both pathways. A second oxidative step, required only for androgen synthesis, involves an acyl-carbon cleavage. The 17-alpha hydroxy intermediates, as part of adrenal glucocorticoids biosynthesis pathway, are precursors of cortisol. Hydroxylates steroid hormones, pregnenolone and progesterone to form 17-alpha hydroxy metabolites, followed by the cleavage of the C17-C20 bond to form C19 steroids, dehydroepiandrosterone (DHEA) and androstenedione. Has 16-alpha hydroxylase activity. Catalyzes 16-alpha hydroxylation of 17-alpha hydroxy pregnenolone, followed by the cleavage of the C17-C20 bond to form 16-alpha-hydroxy DHEA. Also 16-alpha hydroxylates androgens, relevant for estriol synthesis. Mechanistically, uses molecular oxygen inserting one oxygen atom into a substrate, and reducing the second into a water molecule, with two electrons provided by NADPH via cytochrome P450 reductase (CPR; NADPH-ferrihemoprotein reductase). The chain is Steroid 17-alpha-hydroxylase/17,20 lyase (CYP17A1) from Capra hircus (Goat).